Here is a 386-residue protein sequence, read N- to C-terminus: Ribonuclease D (386 aa).

Residues 3 to 174 enclose the 3'-5' exonuclease domain; it reads HTITTTDELA…EIYEYLSAEL (172 aa). The region spanning 213-294 is the HRDC domain; it reads SGRVVAIAQQ…ARGMSVPNSE (82 aa).

This sequence belongs to the RNase D family. Requires a divalent metal cation as cofactor.

It is found in the cytoplasm. It carries out the reaction Exonucleolytic cleavage that removes extra residues from the 3'-terminus of tRNA to produce 5'-mononucleotides.. Exonuclease involved in the 3' processing of various precursor tRNAs. Initiates hydrolysis at the 3'-terminus of an RNA molecule and releases 5'-mononucleotides. The chain is Ribonuclease D from Jannaschia sp. (strain CCS1).